The chain runs to 573 residues: Cytochrome P450 monooxygenase GME11363 (573 aa).

Residues 10–30 form a helical membrane-spanning segment; that stretch reads IGVVAAVLLAALILLYRAALP. C519 contacts heme.

Belongs to the cytochrome P450 family. Heme serves as cofactor.

The protein localises to the membrane. Its pathway is secondary metabolite biosynthesis. Functionally, cytochrome P450 monooxygenase; part of the gene cluster that mediates the biosynthesis of dibenzodioxocinones such as pestalotiollide B, a novel class of inhibitors against cholesterol ester transfer protein (CEPT). The biosynthesis initiates from condensation of acetate and malonate units catalyzed by the non-reducing PKS pks8/GME11356. Pks8/GME11356 lacks a thioesterase (TE) domain, which is important to the cyclizing of the third ring of atrochrysone carboxylic acid, and the esterase GME11355 might play the role of TE and catalyzes the cyclization reaction of the C ring. The lactamase-like protein GME11357 (or other beta-lactamases in Pestalotiopsis microspora) probably hydrolyzes the thioester bond between the ACP of pks8/GME11356 and the intermediate to release atrochrysone carboxylic acid, which is spontaneously dehydrates to form endocrocin anthrone. Endocrocin anthrone is further converted to emodin via the endocrocin intermediate. Emodin is then oxidized by several enzymes such as the Baeyer-Villiger oxidase GME11358, the oxidoreductase GME11367, the short chain dehydrogenase/reductase GME11373, as well as by other oxidoreductases from the cluster, to modify the A and C rings and open the B ring, and finally yield monodictyphenone. The prenyltransferase GME11375 may catalyze the addition reaction between the C5 side chains and the carbon bone of dibenzodioxocinones. The remaining biochemical reactions to the final product dibenzodioxocinones should be methylation catalyzed by methyltransferase GME11366 and reduction and lactonization reaction catalyzed by a series of oxidordeuctases. In Pestalotiopsis microspora, this protein is Cytochrome P450 monooxygenase GME11363.